The sequence spans 737 residues: Catalase-peroxidase 2 (737 aa).

The tract at residues 1-33 (MPEATEHPPIGEAQTEPAQSGCPMVIKPPVEGG) is disordered. The tryptophyl-tyrosyl-methioninium (Trp-Tyr) (with M-261) cross-link spans 107 to 235 (WHAAGTYRVQ…LGASHMGLIY (129 aa)). Histidine 108 (proton acceptor) is an active-site residue. Residues 235 to 261 (YVNPEGPEGNPDPIAAAIDIRETFGRM) constitute a cross-link (tryptophyl-tyrosyl-methioninium (Tyr-Met) (with W-107)). Histidine 276 serves as a coordination point for heme.

This sequence belongs to the peroxidase family. Peroxidase/catalase subfamily. As to quaternary structure, homodimer or homotetramer. The cofactor is heme b. In terms of processing, formation of the three residue Trp-Tyr-Met cross-link is important for the catalase, but not the peroxidase activity of the enzyme.

The enzyme catalyses H2O2 + AH2 = A + 2 H2O. It carries out the reaction 2 H2O2 = O2 + 2 H2O. Functionally, bifunctional enzyme with both catalase and broad-spectrum peroxidase activity. This is Catalase-peroxidase 2 from Mycolicibacterium vanbaalenii (strain DSM 7251 / JCM 13017 / BCRC 16820 / KCTC 9966 / NRRL B-24157 / PYR-1) (Mycobacterium vanbaalenii).